The primary structure comprises 363 residues: MESEGFSATTEQYEYYDYANETGLQPCDETDWDFSYSLLPVFYMIVFVLGLSGNGVVIFTVWKAKPKRRSADTYIGNLALADLAFVVTLPLWATYTALGFHWPFGSALCKLSSYLVLLNMFASVFCLTCLSFDRYLAIVHSLSSAKLRSRSSILVSLAVIWLFSGLLALPSLILRDTRVEGNNTICDLDFSGVSSKENENFWIGGLSILTTVPGFLLPLLLMTIFYCFIGGKVTMHFQNLKKEEQKKKRLLKIIITLVVVFAICWLPFHILKTIHFLDLMGFLELSCSAQNIIVSLHPYATCLAYVNSCLNPFLYAFFDLRFRSQCFFFFGFKKVLQGHLSNTSSSLSAQTQKSEIHSLATKV.

Residues 1–38 lie on the Extracellular side of the membrane; it reads MESEGFSATTEQYEYYDYANETGLQPCDETDWDFSYSL. Asn-20 carries N-linked (GlcNAc...) asparagine glycosylation. 2 disulfide bridges follow: Cys-27-Cys-287 and Cys-109-Cys-186. A helical membrane pass occupies residues 39–59; sequence LPVFYMIVFVLGLSGNGVVIF. The Cytoplasmic segment spans residues 60–77; that stretch reads TVWKAKPKRRSADTYIGN. Residues 78–98 traverse the membrane as a helical segment; the sequence is LALADLAFVVTLPLWATYTAL. Residues 99-111 lie on the Extracellular side of the membrane; it reads GFHWPFGSALCKL. Residues 112 to 132 form a helical membrane-spanning segment; it reads SSYLVLLNMFASVFCLTCLSF. Residues 133-152 are Cytoplasmic-facing; sequence DRYLAIVHSLSSAKLRSRSS. A helical membrane pass occupies residues 153–173; the sequence is ILVSLAVIWLFSGLLALPSLI. The Extracellular segment spans residues 174 to 200; the sequence is LRDTRVEGNNTICDLDFSGVSSKENEN. N-linked (GlcNAc...) asparagine glycosylation occurs at Asn-182. Residues 201-221 form a helical membrane-spanning segment; that stretch reads FWIGGLSILTTVPGFLLPLLL. At 222 to 249 the chain is on the cytoplasmic side; it reads MTIFYCFIGGKVTMHFQNLKKEEQKKKR. Residues 250–270 form a helical membrane-spanning segment; sequence LLKIIITLVVVFAICWLPFHI. Residues 271–297 lie on the Extracellular side of the membrane; it reads LKTIHFLDLMGFLELSCSAQNIIVSLH. Residues 298 to 318 form a helical membrane-spanning segment; that stretch reads PYATCLAYVNSCLNPFLYAFF. At 319-363 the chain is on the cytoplasmic side; the sequence is DLRFRSQCFFFFGFKKVLQGHLSNTSSSLSAQTQKSEIHSLATKV.

Belongs to the G-protein coupled receptor 1 family. In terms of tissue distribution, expressed in all blood vessels including the posterior cardinal vein, intersomitic veins and the vitelline vein network.

The protein resides in the cell membrane. In terms of biological role, g protein-coupled receptor for peptide hormones apelin (apln) and apelin receptor early endogenous ligand (apela), that plays a role in the regulation of normal cardiovascular function and fluid homeostasis. When acting as apelin receptor, activates both G(i) protein pathway that inhibits adenylate cyclase activity, and the beta-arrestin pathway that promotes internalization of the receptor. Also functions as mechanoreceptor that is activated by pathological stimuli in a G-protein-independent fashion to induce beta-arrestin signaling, hence eliciting cardiac hypertrophy. However, the presence of apelin ligand blunts cardiac hypertrophic induction from APLNR/APJ on response to pathological stimuli. Plays a key role in early development such as gastrulation, blood vessels formation and heart morphogenesis by acting as a receptor for apela hormone, promoting endoderm and mesendoderm cell migration and regulating the migration of cells fated to become myocardial progenitors, respectively. Promotes angioblast migration toward the embryonic midline, i.e. the position of the future vessel formation, during vasculogenesis. May promote sinus venosus (SV)-derived endothelial cells migration into the developing heart to promote coronary blood vessel development. Required for cardiovascular development, particularly for intersomitic vein angiogenesis by acting as a receptor for apln hormone. Also plays a role in various processes in adults such as regulation of blood vessel formation, blood pressure, heart contractility, and heart failure. Acts upstream of the i/o type of G-alpha proteins in the differentiation of endothelium, erythroid cells, myeloid cells and cardiomyocytes. The sequence is that of Apelin receptor B (aplnr-b) from Xenopus laevis (African clawed frog).